We begin with the raw amino-acid sequence, 436 residues long: Trigger factor (436 aa).

The PPIase FKBP-type domain maps to 163–248 (GDRVTVDFEG…LKKIEAAHLP (86 aa)).

This sequence belongs to the FKBP-type PPIase family. Tig subfamily.

The protein localises to the cytoplasm. The enzyme catalyses [protein]-peptidylproline (omega=180) = [protein]-peptidylproline (omega=0). Functionally, involved in protein export. Acts as a chaperone by maintaining the newly synthesized protein in an open conformation. Functions as a peptidyl-prolyl cis-trans isomerase. In Albidiferax ferrireducens (strain ATCC BAA-621 / DSM 15236 / T118) (Rhodoferax ferrireducens), this protein is Trigger factor.